We begin with the raw amino-acid sequence, 697 residues long: Exocyst complex component 7 (697 aa).

The tract at residues 1–384 (MIPPQEASAR…FSTVLTVFPI (384 aa)) is SEC8 and ARHQ binding. Coiled coils occupy residues 5–42 (QEAS…TRNM) and 63–85 (VHKQ…SCLD). Ser133 is subject to Phosphoserine. A disordered region spans residues 238-270 (FRKSSSSSGVPYSPAIPNKRKDTPTKKPIKRPG).

The protein belongs to the EXO70 family. As to quaternary structure, the exocyst complex is composed of EXOC1, EXOC2, EXOC3, EXOC4, EXOC5, EXOC6, EXOC7 and EXOC8. Interacts with RAB11FIP3. Interacts with ARHQ in a GTP-dependent manner.

It localises to the cytoplasm. Its subcellular location is the cytosol. It is found in the cell membrane. The protein localises to the midbody. The protein resides in the midbody ring. Component of the exocyst complex involved in the docking of exocytic vesicles with fusion sites on the plasma membrane. In adipocytes, plays a crucial role in targeting SLC2A4 vesicle to the plasma membrane in response to insulin, perhaps directing the vesicle to the precise site of fusion. It is required for neuron survival and plays an essential role in cortical development. The sequence is that of Exocyst complex component 7 (Exoc7) from Mus musculus (Mouse).